We begin with the raw amino-acid sequence, 344 residues long: GTP 3',8-cyclase (344 aa).

The region spanning 19–244 is the Radical SAM core domain; that stretch reads PFGRTISYLR…MDLAESTGGP (226 aa). Position 28 (Arg28) interacts with GTP. [4Fe-4S] cluster contacts are provided by Cys35 and Cys39. Tyr41 is an S-adenosyl-L-methionine binding site. Cys42 lines the [4Fe-4S] cluster pocket. Arg77 is a GTP binding site. Gly81 contacts S-adenosyl-L-methionine. Thr111 is a GTP binding site. Residue Ser135 participates in S-adenosyl-L-methionine binding. Lys171 is a GTP binding site. Met205 is an S-adenosyl-L-methionine binding site. 2 residues coordinate [4Fe-4S] cluster: Cys268 and Cys271. 273–275 contributes to the GTP binding site; that stretch reads RVR. Cys285 serves as a coordination point for [4Fe-4S] cluster.

Belongs to the radical SAM superfamily. MoaA family. As to quaternary structure, monomer and homodimer. [4Fe-4S] cluster is required as a cofactor.

It carries out the reaction GTP + AH2 + S-adenosyl-L-methionine = (8S)-3',8-cyclo-7,8-dihydroguanosine 5'-triphosphate + 5'-deoxyadenosine + L-methionine + A + H(+). The protein operates within cofactor biosynthesis; molybdopterin biosynthesis. Functionally, catalyzes the cyclization of GTP to (8S)-3',8-cyclo-7,8-dihydroguanosine 5'-triphosphate. The chain is GTP 3',8-cyclase from Bradyrhizobium diazoefficiens (strain JCM 10833 / BCRC 13528 / IAM 13628 / NBRC 14792 / USDA 110).